The chain runs to 488 residues: Splicing factor U2AF 65 kDa subunit (488 aa).

Basic and acidic residues-rich tracts occupy residues 25–55 (LESL…DEDR) and 78–129 (DRRD…KYRF). Residues 25–133 (LESLQEDVKP…PKKYRFWDVP (109 aa)) are disordered. 3 RRM domains span residues 175 to 257 (RRLY…RPRD), 282 to 359 (NKIF…LACA), and 389 to 479 (EILC…YYDV).

This sequence belongs to the splicing factor SR family. In terms of assembly, forms a heterodimer with the U2AF small subunit.

Its subcellular location is the nucleus. Necessary for the splicing of pre-mRNA. Binds to the polypyrimidine tract of introns early during spliceosome assembly. This chain is Splicing factor U2AF 65 kDa subunit (uaf-1), found in Caenorhabditis briggsae.